Consider the following 155-residue polypeptide: Transcription antitermination protein NusB (155 aa).

This sequence belongs to the NusB family.

Its function is as follows. Involved in transcription antitermination. Required for transcription of ribosomal RNA (rRNA) genes. Binds specifically to the boxA antiterminator sequence of the ribosomal RNA (rrn) operons. This chain is Transcription antitermination protein NusB, found in Halorhodospira halophila (strain DSM 244 / SL1) (Ectothiorhodospira halophila (strain DSM 244 / SL1)).